Consider the following 596-residue polypeptide: MKLSVLTFVVDALLVCSSIVDAGVTDFPSLPSNEVYVKMNFQKKYGSSFENALDDTKGRTRLMTRDDDYELVELTNQNSFYSVELDIGTPPQKVTVLVDTGSSDLWVTGSDNPYCSTKKKDTTGSSFKQVNKDALASVVESVFTEISYDTTIVTSEATATFDSTASTSQLIDCATYGTFNTSKSSTFNSNNTEFSIAYGDTTFASGTWGHDQLSLNDLNITGLSFAVANETNSTVGVLGIGLPGLESTYSGVSLSSVQKSYTYNNFPMVLKNSGVIKSTAYSLFANDSDSKHGTILFGAVDHGKYAGDLYTIPIINTLQHRGYKDPIQFQVTLQGLGTSKGDKEDNLTTLTTTKIPVLLDSGTTISYMPTELVKMLADQVGATYSSAYGYYIMDCIKEMEEESSIIFDFGGFYLSNWLSDFQLVTDSRSNICILGIAPQSDPTIILGDNFLANTYVVYDLDNMEISMAQANFSDDGEYIEIIESAVPSALKAPGYSSTWSTYESIVSGGNMFSTAANSSISYFASTSHSATSSSSSKGQKTQTSTTALSISKSTSSTSSTGMLSPTSSSSTRKENGGHNLNPPFFARFITAIFHHI.

Residues 1 to 22 (MKLSVLTFVVDALLVCSSIVDA) form the signal peptide. Residues 23–65 (GVTDFPSLPSNEVYVKMNFQKKYGSSFENALDDTKGRTRLMTR) constitute a propeptide that is removed on maturation. A Peptidase A1 domain is found at 81–468 (YSVELDIGTP…DLDNMEISMA (388 aa)). Residue D99 is part of the active site. N180, N190, N219, N229, N232, N286, and N346 each carry an N-linked (GlcNAc...) asparagine glycan. D360 is a catalytic residue. N-linked (GlcNAc...) asparagine glycans are attached at residues N471 and N517. Over residues 530–570 (ATSSSSSKGQKTQTSTTALSISKSTSSTSSTGMLSPTSSSS) the composition is skewed to low complexity. The segment at 530-578 (ATSSSSSKGQKTQTSTTALSISKSTSSTSSTGMLSPTSSSSTRKENGGH) is disordered. N575 carries GPI-anchor amidated asparagine lipidation. Residues 576–596 (GGHNLNPPFFARFITAIFHHI) constitute a propeptide, removed in mature form.

It belongs to the peptidase A1 family.

The protein resides in the cell membrane. The enzyme catalyses Hydrolyzes various precursor proteins with Arg or Lys in P1, and commonly Arg or Lys also in P2. The P3 amino acid is usually non-polar, but otherwise additional basic amino acids are favorable in both non-prime and prime positions.. Cleaves proteins C-terminally to the most C-terminal basic residue. Can process the alpha-mating factor precursor. Required for cell wall integrity. This Saccharomyces cerevisiae (strain ATCC 204508 / S288c) (Baker's yeast) protein is Aspartic proteinase MKC7 (MKC7).